Reading from the N-terminus, the 236-residue chain is Phospholipid hydroperoxide glutathione peroxidase, chloroplastic (236 aa).

Residues 1–64 (MASMAFSTTF…SNFPIVPSKT (64 aa)) constitute a chloroplast transit peptide. The active site involves Cys-111.

The protein belongs to the glutathione peroxidase family.

It localises to the plastid. The protein localises to the chloroplast stroma. The catalysed reaction is a hydroperoxy polyunsaturated fatty acid + 2 glutathione = a hydroxy polyunsaturated fatty acid + glutathione disulfide + H2O. In terms of biological role, protects cells and enzymes from oxidative damage, by catalyzing the reduction of hydrogen peroxide, lipid peroxides and organic hydroperoxide, by glutathione. The chain is Phospholipid hydroperoxide glutathione peroxidase, chloroplastic from Pisum sativum (Garden pea).